We begin with the raw amino-acid sequence, 557 residues long: Dihydroxy-acid dehydratase (557 aa).

Residue Cys-47 participates in [2Fe-2S] cluster binding. Mg(2+) is bound at residue Asp-79. Cys-120 contributes to the [2Fe-2S] cluster binding site. Asp-121 and Lys-122 together coordinate Mg(2+). Lys-122 carries the post-translational modification N6-carboxylysine. Cys-192 is a [2Fe-2S] cluster binding site. Mg(2+) is bound at residue Glu-444. Ser-470 acts as the Proton acceptor in catalysis.

The protein belongs to the IlvD/Edd family. In terms of assembly, homodimer. [2Fe-2S] cluster is required as a cofactor. Mg(2+) serves as cofactor.

It catalyses the reaction (2R)-2,3-dihydroxy-3-methylbutanoate = 3-methyl-2-oxobutanoate + H2O. The catalysed reaction is (2R,3R)-2,3-dihydroxy-3-methylpentanoate = (S)-3-methyl-2-oxopentanoate + H2O. The protein operates within amino-acid biosynthesis; L-isoleucine biosynthesis; L-isoleucine from 2-oxobutanoate: step 3/4. It functions in the pathway amino-acid biosynthesis; L-valine biosynthesis; L-valine from pyruvate: step 3/4. Functions in the biosynthesis of branched-chain amino acids. Catalyzes the dehydration of (2R,3R)-2,3-dihydroxy-3-methylpentanoate (2,3-dihydroxy-3-methylvalerate) into 2-oxo-3-methylpentanoate (2-oxo-3-methylvalerate) and of (2R)-2,3-dihydroxy-3-methylbutanoate (2,3-dihydroxyisovalerate) into 2-oxo-3-methylbutanoate (2-oxoisovalerate), the penultimate precursor to L-isoleucine and L-valine, respectively. This Synechococcus sp. (strain CC9902) protein is Dihydroxy-acid dehydratase.